Reading from the N-terminus, the 397-residue chain is Phosphoribulokinase, chloroplastic (397 aa).

A chloroplast-targeting transit peptide spans M1–C44. C62 and C101 form a disulfide bridge.

The protein belongs to the phosphoribulokinase family.

Its subcellular location is the plastid. The protein resides in the chloroplast. It carries out the reaction D-ribulose 5-phosphate + ATP = D-ribulose 1,5-bisphosphate + ADP + H(+). It participates in carbohydrate biosynthesis; Calvin cycle. Light regulated via thioredoxin by reversible oxidation/reduction of sulfhydryl/disulfide groups. In Mesembryanthemum crystallinum (Common ice plant), this protein is Phosphoribulokinase, chloroplastic.